The following is a 1173-amino-acid chain: WASH complex subunit 4 (1173 aa).

At A2 the chain carries N-acetylalanine. A Phosphoserine modification is found at S7. The tract at residues 705–1173 is sufficient for interaction with WASHC5; sequence KDLALFFSLN…STVSADPVVK (469 aa). Residues 1135-1161 adopt a coiled-coil conformation; it reads RADKTAAEENQEKKEKEEETKTSNGDL. A compositionally biased stretch (basic and acidic residues) spans 1142 to 1155; sequence EENQEKKEKEEETK. The interval 1142–1173 is disordered; it reads EENQEKKEKEEETKTSNGDLSDSTVSADPVVK. T1154 is modified (phosphothreonine). Positions 1157–1167 are enriched in polar residues; the sequence is SNGDLSDSTVS.

The protein belongs to the SWIP family. As to quaternary structure, component of the WASH core complex also described as WASH regulatory complex (SHRC) composed of WASH (WASHC1, WASH2P or WASH3P), WASHC2 (WASHC2A or WASHC2C), WASHC3, WASHC4 and WASHC5. The WASH core complex associates via WASHC2 with the F-actin-capping protein dimer (formed by CAPZA1, CAPZA2 or CAPZA3 and CAPZB) in a transient or substoichiometric manner which was initially described as WASH complex.

The protein localises to the early endosome. Functionally, acts as a component of the WASH core complex that functions as a nucleation-promoting factor (NPF) at the surface of endosomes, where it recruits and activates the Arp2/3 complex to induce actin polymerization, playing a key role in the fission of tubules that serve as transport intermediates during endosome sorting. This chain is WASH complex subunit 4, found in Homo sapiens (Human).